The sequence spans 273 residues: Proteasome subunit beta type-5-B (273 aa).

Positions Met-1 to Gly-57 are cleaved as a propeptide — removed in mature form. Catalysis depends on Thr-58, which acts as the Nucleophile.

Belongs to the peptidase T1B family. In terms of assembly, component of the 20S core complex of the 26S proteasome. The 26S proteasome is composed of a core protease (CP), known as the 20S proteasome, capped at one or both ends by the 19S regulatory particle (RP/PA700). The 20S proteasome core is composed of 28 subunits that are arranged in four stacked rings, resulting in a barrel-shaped structure. The two end rings are each formed by seven alpha subunits, and the two central rings are each formed by seven beta subunits. The catalytic chamber with the active sites is on the inside of the barrel.

It is found in the cytoplasm. It localises to the nucleus. It carries out the reaction Cleavage of peptide bonds with very broad specificity.. Its function is as follows. The proteasome is a multicatalytic proteinase complex which is characterized by its ability to cleave peptides with Arg, Phe, Tyr, Leu, and Glu adjacent to the leaving group at neutral or slightly basic pH. The proteasome has an ATP-dependent proteolytic activity. The sequence is that of Proteasome subunit beta type-5-B (PBE2) from Arabidopsis thaliana (Mouse-ear cress).